The sequence spans 58 residues: Small ribosomal subunit protein bS21 (58 aa).

The interval 36–58 is disordered; the sequence is RHHETPVEKYKRKLQQRRRSRRR. A compositionally biased stretch (basic residues) spans 45–58; it reads YKRKLQQRRRSRRR.

The protein belongs to the bacterial ribosomal protein bS21 family.

This is Small ribosomal subunit protein bS21 from Prochlorococcus marinus (strain NATL1A).